A 314-amino-acid chain; its full sequence is MAPPQVLAFGLLLAAATATFAAAQEECVCENYKLAVNCFVNNNRQCQCTSVGAQNTVICSKLAAKCLVMKAEMNGSKLGRRAKPEGALQNNDGLYDPDCDESGLFKAKQCNGTSMCWCVNTAGVRRTDKDTEITCSERVRTYWIIIELKHKAREKPYDSKSLRTALQKEITTRYQLDPKFITSILYENNVITIDLVQNSSQKTQNDVDIADVAYYFEKDVKGESLFHSKKMDLTVNGEQLDLDPGQTLIYYVDEKAPEFSMQGLKAGVIAVIVVVVIAVVAGIVVLVISRKKRMAKYEKAEIKEMGEMHRELNA.

Residues 1–23 (MAPPQVLAFGLLLAAATATFAAA) form the signal peptide. At 24 to 265 (QEECVCENYK…APEFSMQGLK (242 aa)) the chain is on the extracellular side. Cystine bridges form between cysteine 27-cysteine 46, cysteine 29-cysteine 59, cysteine 38-cysteine 48, cysteine 66-cysteine 99, cysteine 110-cysteine 116, and cysteine 118-cysteine 135. The Thyroglobulin type-1 domain maps to 63–135 (AAKCLVMKAE…RTDKDTEITC (73 aa)). The N-linked (GlcNAc...) asparagine; partial glycan is linked to asparagine 74. Residue asparagine 111 is glycosylated (N-linked (GlcNAc...) asparagine). Asparagine 198 is a glycosylation site (N-linked (GlcNAc...) asparagine). The helical transmembrane segment at 266 to 288 (AGVIAVIVVVVIAVVAGIVVLVI) threads the bilayer. Residues 289–314 (SRKKRMAKYEKAEIKEMGEMHRELNA) are Cytoplasmic-facing.

Belongs to the EPCAM family. As to quaternary structure, monomer. Interacts with phosphorylated CLDN7. Hyperglycosylated in carcinoma tissue as compared with autologous normal epithelia. Glycosylation at Asn-198 is crucial for protein stability. In terms of tissue distribution, highly and selectively expressed by undifferentiated rather than differentiated embryonic stem cells (ESC). Levels rapidly diminish as soon as ESC's differentiate (at protein levels). Expressed in almost all epithelial cell membranes but not on mesodermal or neural cell membranes. Found on the surface of adenocarcinoma.

Its subcellular location is the lateral cell membrane. It is found in the cell junction. It localises to the tight junction. In terms of biological role, may act as a physical homophilic interaction molecule between intestinal epithelial cells (IECs) and intraepithelial lymphocytes (IELs) at the mucosal epithelium for providing immunological barrier as a first line of defense against mucosal infection. Plays a role in embryonic stem cells proliferation and differentiation. Up-regulates the expression of FABP5, MYC and cyclins A and E. This Homo sapiens (Human) protein is Epithelial cell adhesion molecule (EPCAM).